The primary structure comprises 816 residues: Protein EFR3 homolog B (816 aa).

Residues 206-219 show a composition bias toward polar residues; the sequence is SGEGTESRSPSPLQ. The tract at residues 206–230 is disordered; it reads SGEGTESRSPSPLQASEKEKESPAE. The segment covering 221–230 has biased composition (basic and acidic residues); that stretch reads SEKEKESPAE.

Belongs to the EFR3 family. Component of a phosphatidylinositol 4-kinase (PI4K) complex. Palmitoylated at its N-terminus, anchoring the protein to the plasma membrane.

It localises to the cell membrane. In terms of biological role, component of a complex required to localize phosphatidylinositol 4-kinase (PI4K) to the plasma membrane. The complex acts as a regulator of phosphatidylinositol 4-phosphate (PtdIns(4)P) synthesis. In the complex, efr3b probably acts as the membrane-anchoring component. This is Protein EFR3 homolog B (efr3b) from Danio rerio (Zebrafish).